Here is a 128-residue protein sequence, read N- to C-terminus: Glycine cleavage system H protein (128 aa).

Positions 24–106 (VATVGITAFA…YNNGWLLKIK (83 aa)) constitute a Lipoyl-binding domain. Residue K65 is modified to N6-lipoyllysine.

It belongs to the GcvH family. In terms of assembly, the glycine cleavage system is composed of four proteins: P, T, L and H. Requires (R)-lipoate as cofactor.

The glycine cleavage system catalyzes the degradation of glycine. The H protein shuttles the methylamine group of glycine from the P protein to the T protein. This is Glycine cleavage system H protein from Acaryochloris marina (strain MBIC 11017).